The sequence spans 185 residues: Threonylcarbamoyl-AMP synthase (185 aa).

Residues 4-185 form the YrdC-like domain; it reads SFRAQCAARV…LVTGQVIRPA (182 aa).

It belongs to the SUA5 family. TsaC subfamily.

The protein resides in the cytoplasm. The enzyme catalyses L-threonine + hydrogencarbonate + ATP = L-threonylcarbamoyladenylate + diphosphate + H2O. Required for the formation of a threonylcarbamoyl group on adenosine at position 37 (t(6)A37) in tRNAs that read codons beginning with adenine. Catalyzes the conversion of L-threonine, HCO(3)(-)/CO(2) and ATP to give threonylcarbamoyl-AMP (TC-AMP) as the acyladenylate intermediate, with the release of diphosphate. The protein is Threonylcarbamoyl-AMP synthase of Pseudomonas aeruginosa (strain UCBPP-PA14).